Consider the following 89-residue polypeptide: MSSNFTKALSLLSIEALISSTSSVTQHSVFFFKADFRFFVCFWSIWFWTGDISFSLLSMLVKSGPYNTVTSVSLFQLMDSGLDLEFCKP.

The chain crosses the membrane as a helical span at residues 39-61 (FVCFWSIWFWTGDISFSLLSMLV).

Its subcellular location is the membrane. This is an uncharacterized protein from Saccharomyces cerevisiae (strain ATCC 204508 / S288c) (Baker's yeast).